The chain runs to 251 residues: DNA repair protein RecO (251 aa).

Belongs to the RecO family.

In terms of biological role, involved in DNA repair and RecF pathway recombination. The polypeptide is DNA repair protein RecO (Macrococcus caseolyticus (strain JCSC5402) (Macrococcoides caseolyticum)).